Reading from the N-terminus, the 96-residue chain is MKSPYDIILKPIISEDSMEKMEDKKYVFKVDKNANKIEIRNAIEKIFDVKVKSVNTMNVKGKVKRMGAHSGKRSDWKKAIVALTEDSKEIEFFEGM.

Belongs to the universal ribosomal protein uL23 family. Part of the 50S ribosomal subunit. Contacts protein L29, and trigger factor when it is bound to the ribosome.

Its function is as follows. One of the early assembly proteins it binds 23S rRNA. One of the proteins that surrounds the polypeptide exit tunnel on the outside of the ribosome. Forms the main docking site for trigger factor binding to the ribosome. The protein is Large ribosomal subunit protein uL23 of Finegoldia magna (strain ATCC 29328 / DSM 20472 / WAL 2508) (Peptostreptococcus magnus).